The sequence spans 317 residues: L-lactate dehydrogenase (317 aa).

Residues V17, D38, K43, Y68, and 82 to 83 (GV) contribute to the NAD(+) site. R91 is a substrate binding site. Residues S104, 121–123 (VSN), and S146 contribute to the NAD(+) site. 123–126 (NPVD) provides a ligand contact to substrate. 151–154 (DTSR) contributes to the substrate binding site. Beta-D-fructose 1,6-bisphosphate contacts are provided by K156 and H171. Residue H178 is the Proton acceptor of the active site. Residue Y224 is modified to Phosphotyrosine. T233 is a binding site for substrate.

This sequence belongs to the LDH/MDH superfamily. LDH family. As to quaternary structure, homotetramer.

It is found in the cytoplasm. It catalyses the reaction (S)-lactate + NAD(+) = pyruvate + NADH + H(+). It participates in fermentation; pyruvate fermentation to lactate; (S)-lactate from pyruvate: step 1/1. With respect to regulation, allosterically activated by fructose 1,6-bisphosphate (FBP). Catalyzes the conversion of lactate to pyruvate. The sequence is that of L-lactate dehydrogenase from Clostridium perfringens (strain ATCC 13124 / DSM 756 / JCM 1290 / NCIMB 6125 / NCTC 8237 / Type A).